The primary structure comprises 134 residues: Perlwapin (134 aa).

WAP domains lie at 2–45, 46–89, and 90–132; these read GPNL…CVPK, PKPG…YRPE, and KPGS…EKPC. Cystine bridges form between Cys8–Cys34, Cys17–Cys38, Cys21–Cys33, Cys27–Cys42, Cys51–Cys77, Cys59–Cys82, Cys64–Cys76, Cys70–Cys85, Cys94–Cys121, Cys104–Cys124, Cys108–Cys120, and Cys114–Cys128.

Nacreous layer of shell.

Functionally, inhibits growth of calcium carbonate crystals. May inhibit growth of certain crystallographic planes in the mineral phase of nacre in the shell. This is Perlwapin from Haliotis laevigata (Smooth Australian abalone).